The following is a 262-amino-acid chain: UDP-2,3-diacylglucosamine hydrolase (262 aa).

Asp-10, His-12, Asp-47, Asn-86, His-121, His-218, and His-220 together coordinate Mn(2+).

It belongs to the LpxH family. Requires Mn(2+) as cofactor.

Its subcellular location is the cell inner membrane. It is found in the cytoplasm. The catalysed reaction is UDP-2-N,3-O-bis[(3R)-3-hydroxytetradecanoyl]-alpha-D-glucosamine + H2O = 2-N,3-O-bis[(3R)-3-hydroxytetradecanoyl]-alpha-D-glucosaminyl 1-phosphate + UMP + 2 H(+). It functions in the pathway glycolipid biosynthesis; lipid IV(A) biosynthesis; lipid IV(A) from (3R)-3-hydroxytetradecanoyl-[acyl-carrier-protein] and UDP-N-acetyl-alpha-D-glucosamine: step 4/6. In terms of biological role, hydrolyzes the pyrophosphate bond of UDP-2,3-diacylglucosamine to yield 2,3-diacylglucosamine 1-phosphate (lipid X) and UMP by catalyzing the attack of water at the alpha-P atom. Involved in the biosynthesis of lipid A, a phosphorylated glycolipid that anchors the lipopolysaccharide to the outer membrane of the cell. In Porphyromonas gingivalis (strain ATCC BAA-308 / W83), this protein is UDP-2,3-diacylglucosamine hydrolase.